A 178-amino-acid polypeptide reads, in one-letter code: Large ribosomal subunit protein uL6 (178 aa).

The protein belongs to the universal ribosomal protein uL6 family. In terms of assembly, part of the 50S ribosomal subunit.

This protein binds to the 23S rRNA, and is important in its secondary structure. It is located near the subunit interface in the base of the L7/L12 stalk, and near the tRNA binding site of the peptidyltransferase center. This Francisella tularensis subsp. tularensis (strain WY96-3418) protein is Large ribosomal subunit protein uL6.